The following is a 147-amino-acid chain: Large ribosomal subunit protein bL9 (147 aa).

This sequence belongs to the bacterial ribosomal protein bL9 family.

Its function is as follows. Binds to the 23S rRNA. The protein is Large ribosomal subunit protein bL9 of Natranaerobius thermophilus (strain ATCC BAA-1301 / DSM 18059 / JW/NM-WN-LF).